Here is a 267-residue protein sequence, read N- to C-terminus: 22 kDa alpha-zein 14 (267 aa).

The signal sequence occupies residues 1–21; it reads MATKILSLLALLALFASATNA.

Belongs to the zein family.

Functionally, zeins are major seed storage proteins. The protein is 22 kDa alpha-zein 14 of Zea mays (Maize).